The chain runs to 105 residues: Flagellar transcriptional regulator FlhD (105 aa).

Belongs to the FlhD family. Homodimer; disulfide-linked. Forms a heterohexamer composed of two FlhC and four FlhD subunits. Each FlhC binds a FlhD dimer, forming a heterotrimer, and a hexamer assembles by dimerization of two heterotrimers.

Its subcellular location is the cytoplasm. In terms of biological role, functions in complex with FlhC as a master transcriptional regulator that regulates transcription of several flagellar and non-flagellar operons by binding to their promoter region. Activates expression of class 2 flagellar genes, including fliA, which is a flagellum-specific sigma factor that turns on the class 3 genes. Also regulates genes whose products function in a variety of physiological pathways. The polypeptide is Flagellar transcriptional regulator FlhD (Ralstonia nicotianae (strain ATCC BAA-1114 / GMI1000) (Ralstonia solanacearum)).